A 132-amino-acid chain; its full sequence is uncharacterized protein (132 aa).

Helical transmembrane passes span Leu-7–Phe-29, Val-44–Leu-62, Leu-69–Val-88, and Gly-108–Phe-130.

The protein resides in the cell membrane. This is an uncharacterized protein from Aquifex aeolicus (strain VF5).